The following is a 156-amino-acid chain: Ribosome maturation factor RimP (156 aa).

Belongs to the RimP family.

It localises to the cytoplasm. Its function is as follows. Required for maturation of 30S ribosomal subunits. This Oceanobacillus iheyensis (strain DSM 14371 / CIP 107618 / JCM 11309 / KCTC 3954 / HTE831) protein is Ribosome maturation factor RimP.